The following is a 316-amino-acid chain: Ubiquinol oxidase, mitochondrial (316 aa).

Residues 1-26 constitute a mitochondrion transit peptide; it reads MGVRAQPLLARSLITTTQPWILSARS. The chain crosses the membrane as a helical span at residues 124–144; it reads VHRAVVLETVAAVPGMVAGML. Fe cation-binding residues include Glu-131, Glu-170, and His-173. Residues 189–209 traverse the membrane as a helical segment; the sequence is MLVALVQTLFFNVYFLAYMLF. Residues Glu-221, Glu-272, and His-275 each contribute to the Fe cation site.

This sequence belongs to the alternative oxidase family. It depends on Fe cation as a cofactor.

It localises to the mitochondrion inner membrane. It carries out the reaction 2 a ubiquinol + O2 = 2 a ubiquinone + 2 H2O. In terms of biological role, alternative oxidase which function may be to reoxidize reducing equivalents produced by glycolysis such as ubiquinol. This is Ubiquinol oxidase, mitochondrial (AOX) from Batrachochytrium dendrobatidis (strain JAM81 / FGSC 10211) (Frog chytrid fungus).